The sequence spans 123 residues: Immunoglobulin lambda variable 5-39 (123 aa).

The signal sequence occupies residues 1–19 (MAWTPLLLLLLSHCTGSLS). The segment at 20–44 (QPVLTQPTSLSASPGASARFTCTLR) is framework-1. The Ig-like domain maps to 21 to 123 (PVLTQPTSLS…YCAIWYSSTS (103 aa)). Residues Cys41 and Cys115 are joined by a disulfide bond. Residues 45–53 (SGINVGTYR) form a complementarity-determining-1 region. The tract at residues 54–70 (IYWYQQKPGSLPRYLLR) is framework-2. The segment at 71–77 (YKSDSDK) is complementarity-determining-2. The interval 78 to 115 (QQGSGVPSRFSGSKDASTNAGLLLISGLQSEDEADYYC) is framework-3. The complementarity-determining-3 stretch occupies residues 116–123 (AIWYSSTS).

Immunoglobulins are composed of two identical heavy chains and two identical light chains; disulfide-linked.

It localises to the secreted. Its subcellular location is the cell membrane. Its function is as follows. V region of the variable domain of immunoglobulin light chains that participates in the antigen recognition. Immunoglobulins, also known as antibodies, are membrane-bound or secreted glycoproteins produced by B lymphocytes. In the recognition phase of humoral immunity, the membrane-bound immunoglobulins serve as receptors which, upon binding of a specific antigen, trigger the clonal expansion and differentiation of B lymphocytes into immunoglobulins-secreting plasma cells. Secreted immunoglobulins mediate the effector phase of humoral immunity, which results in the elimination of bound antigens. The antigen binding site is formed by the variable domain of one heavy chain, together with that of its associated light chain. Thus, each immunoglobulin has two antigen binding sites with remarkable affinity for a particular antigen. The variable domains are assembled by a process called V-(D)-J rearrangement and can then be subjected to somatic hypermutations which, after exposure to antigen and selection, allow affinity maturation for a particular antigen. The protein is Immunoglobulin lambda variable 5-39 of Homo sapiens (Human).